We begin with the raw amino-acid sequence, 1556 residues long: Ras guanine nucleotide exchange factor G (1556 aa).

Disordered stretches follow at residues 19 to 63 (IGNI…KNRG), 93 to 141 (LQLN…SSTT), 163 to 239 (SHVT…LSPS), and 254 to 296 (ATDS…NNNS). Low complexity-rich tracts occupy residues 25-54 (NNNN…SGSN) and 96-141 (NDTD…SSTT). A compositionally biased stretch (acidic residues) spans 170 to 186 (DDDDDDESSSSEEDFDS). Low complexity predominate over residues 196–216 (TSSTTATTTTTTTSVSPLTSS). Residues 256-271 (DSDNQSLEPCNNKTIV) are compositionally biased toward polar residues. Over residues 279 to 295 (DNNNNHNNNNNNNNNNN) the composition is skewed to low complexity. Residues 307-353 (NKTFLDLDEKIYLKIFGYLFAEDLCSINRVSKHLCNIINNQQLWKDL) form the F-box 1 domain. Positions 385 to 416 (NNNNNNNNNNNNNNNNSNISNNNNNINNSNGN) are disordered. The F-box 2 domain maps to 679–726 (VFDISRVSDILLIKIFRNLDSIKDLSVCQRVSKRWNKAIAISSLWEQL). Disordered regions lie at residues 762 to 815 (QPSP…NGLN) and 827 to 1101 (GSNL…ITNN). Residues 827 to 848 (GSNLSNGGNSGSSFSPFNPLSG) show a composition bias toward low complexity. Positions 849 to 866 (SNGGSSFGPFGSGGGGGS) are enriched in gly residues. Composition is skewed to low complexity over residues 867 to 880 (NSNI…LNSS) and 888 to 910 (FLAM…TIST). Positions 911–935 (NCTPTGGSTTNSPNFQSPMVSSSTV) are enriched in polar residues. Low complexity-rich tracts occupy residues 943–957 (SPNL…ISLS) and 972–1053 (PDSS…IQPI). The span at 1059–1076 (VNNNGSQSDLSKISDLNA) shows a compositional bias: polar residues. Positions 1077–1101 (NPNTTTTTTTNTIESSSSSSSITNN) are enriched in low complexity. The N-terminal Ras-GEF domain maps to 1116-1244 (MINVQKLMNL…LIRSFSRKLS (129 aa)). Residues 1254–1279 (IGITGGKSSRKGGGSGSGSGSGGGSG) form a disordered region. The segment covering 1264-1279 (KGGGSGSGSGSGGGSG) has biased composition (gly residues). One can recognise a Ras-GEF domain in the interval 1317–1548 (PAEEIAKQLT…YRVSMQREPR (232 aa)).

Promotes the exchange of Ras-bound GDP by GTP. The chain is Ras guanine nucleotide exchange factor G (gefG) from Dictyostelium discoideum (Social amoeba).